Consider the following 425-residue polypeptide: Actin-related protein 3 (425 aa).

Belongs to the actin family. ARP3 subfamily. As to quaternary structure, component of the Arp2/3 complex, at least composed of arx-1, arx-2, arx-4 and arx-6.

The protein resides in the cytoplasm. Its subcellular location is the cytoskeleton. Its function is as follows. Functions as ATP-binding component of the Arp2/3 complex which is involved in regulation of actin polymerization and together with an activating nucleation-promoting factor (NPF) mediates the formation of branched actin networks. Seems to contact the pointed end of the daughter actin filament. Plays a role in time-dependent memory loss and the retention of conditioned behavior over time. The polypeptide is Actin-related protein 3 (Caenorhabditis elegans).